A 177-amino-acid polypeptide reads, in one-letter code: MSRVGKSPVSIPAGVDVSIKDDQISVKGAGGVLSLAQNALVKVSNNEGKLSFEPVNDSREANAMSGTVRQLVNNMVVGVSKGFEKKLTLIGVGFKAAASGNKLNLAIGFSHPVNFEMPTGITVATPTPTEIVIKGADRQVVGQLAAEIRAVRPPEPYKGKGIRYADEKVTIKETKKK.

This sequence belongs to the universal ribosomal protein uL6 family. Part of the 50S ribosomal subunit.

Functionally, this protein binds to the 23S rRNA, and is important in its secondary structure. It is located near the subunit interface in the base of the L7/L12 stalk, and near the tRNA binding site of the peptidyltransferase center. The chain is Large ribosomal subunit protein uL6 from Acidovorax ebreus (strain TPSY) (Diaphorobacter sp. (strain TPSY)).